Reading from the N-terminus, the 828-residue chain is Periplasmic nitrate reductase (828 aa).

The tat-type signal signal peptide spans 1 to 31; that stretch reads MKLSRRSFMKANAVAAAAAAAGLSVPGVARA. The 57-residue stretch at 39–95 folds into the 4Fe-4S Mo/W bis-MGD-type domain; that stretch reads IKWDKAPCRFCGTGCGVLVGTQQGRVVACQGDPDAPVNRGLNCIKGYFLPKIMYGKD. 4 residues coordinate [4Fe-4S] cluster: Cys-46, Cys-49, Cys-53, and Cys-81. Residues Lys-83, Gln-150, Asn-175, Cys-179, 212–219, 243–247, 262–264, Met-372, Gln-376, Asn-482, 508–509, Lys-531, Asp-558, and 718–727 contribute to the Mo-bis(molybdopterin guanine dinucleotide) site; these read WGSNMAEM, STFQH, QSD, SD, and TGRVLEHWHT. Residue Phe-794 coordinates substrate. Mo-bis(molybdopterin guanine dinucleotide) is bound by residues Asn-802 and Lys-819.

Belongs to the prokaryotic molybdopterin-containing oxidoreductase family. NasA/NapA/NarB subfamily. As to quaternary structure, component of the periplasmic nitrate reductase NapAB complex composed of NapA and NapB. It depends on [4Fe-4S] cluster as a cofactor. Mo-bis(molybdopterin guanine dinucleotide) is required as a cofactor. In terms of processing, predicted to be exported by the Tat system. The position of the signal peptide cleavage has not been experimentally proven.

The protein resides in the periplasm. It catalyses the reaction 2 Fe(II)-[cytochrome] + nitrate + 2 H(+) = 2 Fe(III)-[cytochrome] + nitrite + H2O. In terms of biological role, catalytic subunit of the periplasmic nitrate reductase complex NapAB. Receives electrons from NapB and catalyzes the reduction of nitrate to nitrite. The sequence is that of Periplasmic nitrate reductase from Salmonella schwarzengrund (strain CVM19633).